The primary structure comprises 207 residues: Succinyl-CoA:3-ketoacid coenzyme A transferase subunit B (207 aa).

Glu-43 is a catalytic residue.

Belongs to the 3-oxoacid CoA-transferase subunit B family. In terms of assembly, heterodimer of a subunit A and a subunit B.

It carries out the reaction a 3-oxo acid + succinyl-CoA = a 3-oxoacyl-CoA + succinate. The chain is Succinyl-CoA:3-ketoacid coenzyme A transferase subunit B (scoB) from Helicobacter pylori (strain J99 / ATCC 700824) (Campylobacter pylori J99).